The following is a 246-amino-acid chain: Carboxy-S-adenosyl-L-methionine synthase (246 aa).

Residues Tyr39, 64–66 (GCS), 89–90 (DN), 117–118 (DI), Asn132, and Arg199 each bind S-adenosyl-L-methionine.

The protein belongs to the class I-like SAM-binding methyltransferase superfamily. Cx-SAM synthase family. As to quaternary structure, homodimer.

It carries out the reaction prephenate + S-adenosyl-L-methionine = carboxy-S-adenosyl-L-methionine + 3-phenylpyruvate + H2O. Its function is as follows. Catalyzes the conversion of S-adenosyl-L-methionine (SAM) to carboxy-S-adenosyl-L-methionine (Cx-SAM). This is Carboxy-S-adenosyl-L-methionine synthase from Enterobacter sp. (strain 638).